The sequence spans 315 residues: HVA22-like protein h (315 aa).

Residues 148–315 (PKPKPKEKKQ…RKARSAGAPR (168 aa)) are disordered. A compositionally biased stretch (polar residues) spans 173–190 (ATSQAASSNPQVRLQSKK). Residues 234-248 (PPGPPPPPPPPPPSP) are compositionally biased toward pro residues.

It belongs to the DP1 family.

This Arabidopsis thaliana (Mouse-ear cress) protein is HVA22-like protein h (HVA22H).